A 161-amino-acid chain; its full sequence is Pathogenesis-related protein 1 (161 aa).

Residues 1–26 (MNFTGYSRFLIVFVALVGALVLPSKA) form the signal peptide. The SCP domain maps to 34–149 (LRVHNQARGA…NGGTIISCNY (116 aa)). 3 disulfide bridges follow: C70–C138, C113–C117, and C133–C147.

It belongs to the CRISP family.

Its subcellular location is the secreted. It localises to the extracellular space. The protein resides in the apoplast. In terms of biological role, partially responsible for acquired pathogen resistance. The polypeptide is Pathogenesis-related protein 1 (Arabidopsis thaliana (Mouse-ear cress)).